Here is a 314-residue protein sequence, read N- to C-terminus: Olfactory receptor 52K1 (314 aa).

The Extracellular segment spans residues 1–27; the sequence is MLPSNITSTHPAVFLLVGIPGLEHLHA. Asparagine 5 carries an N-linked (GlcNAc...) asparagine glycan. Residues 28-48 form a helical membrane-spanning segment; sequence WISIPFCFAYTLALLGNCTLL. Topologically, residues 49-56 are cytoplasmic; that stretch reads FIIQADAA. The chain crosses the membrane as a helical span at residues 57–77; it reads LHEPMYLFLAMLATIDLVLSS. The Extracellular segment spans residues 78-101; that stretch reads TTLPKMLAIFWFRDQEINFFACLV. Cysteine 99 and cysteine 191 are oxidised to a cystine. A helical transmembrane segment spans residues 102–122; the sequence is QMFFLHSFSIMESAVLLAMAF. At 123 to 141 the chain is on the cytoplasmic side; the sequence is DRYVAICKPLHYTTVLTGS. The helical transmembrane segment at 142-162 threads the bilayer; it reads LITKIGMAAVARAVTLMTPLP. The Extracellular segment spans residues 163-198; that stretch reads FLLRRFHYCRGPVIAHCYCEHMAVVRLACGDTSFNN. Residues 199–219 traverse the membrane as a helical segment; it reads IYGIAVAMFIVVLDLLFVILS. The Cytoplasmic portion of the chain corresponds to 220-239; that stretch reads YVFILQAVLQLASQEARYKA. The chain crosses the membrane as a helical span at residues 240–260; sequence FGTCVSHIGAILSTYTPVVIS. The Extracellular portion of the chain corresponds to 261-275; that stretch reads SVMHRVARHAAPRVH. A helical membrane pass occupies residues 276–296; it reads ILLAIFYLLFPPMVNPIIYGV. At 297–314 the chain is on the cytoplasmic side; it reads KTKQIREYVLSLFQRKNM.

The protein belongs to the G-protein coupled receptor 1 family.

It is found in the cell membrane. Functionally, odorant receptor. The sequence is that of Olfactory receptor 52K1 (OR52K1) from Homo sapiens (Human).